A 311-amino-acid chain; its full sequence is Ribonuclease 3 (311 aa).

The RNase III domain occupies 20–145 (YLCFYRILGF…FIGAIYLDQG (126 aa)). Residue glutamate 62 coordinates Mg(2+). Residue aspartate 66 is part of the active site. Mg(2+) contacts are provided by asparagine 131 and glutamate 134. Glutamate 134 is a catalytic residue. The DRBM domain maps to 173–242 (NFKSKLIEWS…AQMAIKKVKD (70 aa)). Residues 250 to 311 (NEAKSQHSKP…EVEATETEKE (62 aa)) are disordered. Acidic residues predominate over residues 262–288 (VETESVEPELTESETMEPDTLETEAPE).

The protein belongs to the ribonuclease III family. As to quaternary structure, homodimer. The cofactor is Mg(2+).

The protein localises to the cytoplasm. The enzyme catalyses Endonucleolytic cleavage to 5'-phosphomonoester.. In terms of biological role, digests double-stranded RNA. Involved in the processing of primary rRNA transcript to yield the immediate precursors to the large and small rRNAs (23S and 16S). Processes some mRNAs, and tRNAs when they are encoded in the rRNA operon. Processes pre-crRNA and tracrRNA of type II CRISPR loci if present in the organism. The chain is Ribonuclease 3 from Bacteroides thetaiotaomicron (strain ATCC 29148 / DSM 2079 / JCM 5827 / CCUG 10774 / NCTC 10582 / VPI-5482 / E50).